Consider the following 265-residue polypeptide: MNEQPLIAALSLQRAGAPRVGGDRIRLLEAIARHGTIAGAAREVGLSYKTAWDAVGTLNNLFEQPLVEAAPGGRTGGNARVTEAGQALIAGFGLLEGALTKALGVLEGGVSAPEKALNTLWSLTMRTSNRNTLRCTVTRVTLGAVNAEVELALTDGHSLTAVITERSATEMGLAPGVEVFALIKASFVMLAAGGDPGRISACNRLTGIVAARTDGPVNTEIILDLGNCKSITAVITHTSADALGLAPGVPATALFKASHVILAMP.

Mop domains are found at residues 126-192 and 198-264; these read RTSN…MLAA and RISA…ILAM.

The protein belongs to the ModE family.

In Rhodobacter capsulatus (Rhodopseudomonas capsulata), this protein is Molybdenum-pterin-binding protein MopA (mopA).